A 198-amino-acid polypeptide reads, in one-letter code: Recombination protein RecR (198 aa).

Residues 57 to 72 form a C4-type zinc finger; sequence CSVCNNITDLDPCHIC. One can recognise a Toprim domain in the interval 80 to 175; it reads SIICVVQEPR…RVTRIAHGLP (96 aa).

It belongs to the RecR family.

May play a role in DNA repair. It seems to be involved in an RecBC-independent recombinational process of DNA repair. It may act with RecF and RecO. The polypeptide is Recombination protein RecR (Brevibacillus brevis (strain 47 / JCM 6285 / NBRC 100599)).